Here is a 341-residue protein sequence, read N- to C-terminus: N-acetyl-gamma-glutamyl-phosphate reductase (341 aa).

Cys-145 is an active-site residue.

Belongs to the NAGSA dehydrogenase family. Type 1 subfamily.

It localises to the cytoplasm. The catalysed reaction is N-acetyl-L-glutamate 5-semialdehyde + phosphate + NADP(+) = N-acetyl-L-glutamyl 5-phosphate + NADPH + H(+). The protein operates within amino-acid biosynthesis; L-arginine biosynthesis; N(2)-acetyl-L-ornithine from L-glutamate: step 3/4. Catalyzes the NADPH-dependent reduction of N-acetyl-5-glutamyl phosphate to yield N-acetyl-L-glutamate 5-semialdehyde. The chain is N-acetyl-gamma-glutamyl-phosphate reductase from Streptomyces clavuligerus.